We begin with the raw amino-acid sequence, 154 residues long: Large ribosomal subunit protein uL13 (154 aa).

Positions 132–154 (PHEAQQPETLDVGAMNRKNKRAA) are disordered.

Belongs to the universal ribosomal protein uL13 family. As to quaternary structure, part of the 50S ribosomal subunit.

Its function is as follows. This protein is one of the early assembly proteins of the 50S ribosomal subunit, although it is not seen to bind rRNA by itself. It is important during the early stages of 50S assembly. This chain is Large ribosomal subunit protein uL13, found in Rhodopseudomonas palustris (strain HaA2).